We begin with the raw amino-acid sequence, 348 residues long: MSDRLTLLRPDDWHIHLRDGAVLPHTVGDVARTFARAIIMPNLVPPVRNVTEAGAYRERILAARPAGSRFEPLMVLYLTDRTSPEDVRAAKASGFVYAAKLYPAGATTNSDSGVTSIDNIFPAIEALAEVGMPLLVHGEVTRSEIDVFDREKRFIDEHMRRVVERFPTLKVVFEHITTSDAAQFVTEAPANVGATITAQHLLYNRNHMLVGGIRPHFYCLPILKRNTHQVALLDAATSGNPKFFLGTDSAPHARHAKEAACGCAGCYTAYAAIEMYAEAFEQRNALDKLEGFASLHGPAFYGLPANTDTITLVREEWTAPESLPFGEQTVVPLRAGEKLRWRLLEKNA.

Zn(2+)-binding residues include histidine 14 and histidine 16. Substrate-binding positions include 16-18 (HLR) and asparagine 42. Zn(2+) is bound by residues lysine 100, histidine 137, and histidine 175. Lysine 100 carries the post-translational modification N6-carboxylysine. Histidine 137 serves as a coordination point for substrate. Residue leucine 220 coordinates substrate. Zn(2+) is bound at residue aspartate 248. Aspartate 248 is a catalytic residue. Substrate contacts are provided by histidine 252 and alanine 264.

Belongs to the metallo-dependent hydrolases superfamily. DHOase family. Class II DHOase subfamily. As to quaternary structure, homodimer. Zn(2+) serves as cofactor.

It catalyses the reaction (S)-dihydroorotate + H2O = N-carbamoyl-L-aspartate + H(+). Its pathway is pyrimidine metabolism; UMP biosynthesis via de novo pathway; (S)-dihydroorotate from bicarbonate: step 3/3. Functionally, catalyzes the reversible cyclization of carbamoyl aspartate to dihydroorotate. This is Dihydroorotase from Pseudomonas putida (strain ATCC 47054 / DSM 6125 / CFBP 8728 / NCIMB 11950 / KT2440).